We begin with the raw amino-acid sequence, 555 residues long: Glutamine--tRNA ligase (555 aa).

A 'HIGH' region motif is present at residues 34 to 44; that stretch reads PEPNGYLHIGH. Residues 35 to 37 and 41 to 47 contribute to the ATP site; these read EPN and HIGHAKS. L-glutamine is bound by residues Asp67 and Tyr212. Residues Thr231, 261 to 262, and 269 to 271 contribute to the ATP site; these read RL and MSK. Positions 268-272 match the 'KMSKS' region motif; sequence VMSKR. Positions 317 to 324 are interaction with tRNA; it reads TKQDNTIE.

The protein belongs to the class-I aminoacyl-tRNA synthetase family. As to quaternary structure, monomer.

The protein localises to the cytoplasm. The enzyme catalyses tRNA(Gln) + L-glutamine + ATP = L-glutaminyl-tRNA(Gln) + AMP + diphosphate. In Salmonella choleraesuis (strain SC-B67), this protein is Glutamine--tRNA ligase.